A 25-amino-acid polypeptide reads, in one-letter code: Caerin-1.2 (25 aa).

Leu25 carries the leucine amide modification.

Expressed by the skin parotoid and/or rostral glands.

The protein localises to the secreted. In terms of biological role, antibacterial peptide, that adopts an alpha helical conformation which can disrupt bacterial membranes. Each caerin displays a different antimicrobial specificity. In Ranoidea caerulea (Green tree frog), this protein is Caerin-1.2.